Here is a 238-residue protein sequence, read N- to C-terminus: Phosphoribosylaminoimidazole-succinocarboxamide synthase (238 aa).

The protein belongs to the SAICAR synthetase family.

The catalysed reaction is 5-amino-1-(5-phospho-D-ribosyl)imidazole-4-carboxylate + L-aspartate + ATP = (2S)-2-[5-amino-1-(5-phospho-beta-D-ribosyl)imidazole-4-carboxamido]succinate + ADP + phosphate + 2 H(+). The protein operates within purine metabolism; IMP biosynthesis via de novo pathway; 5-amino-1-(5-phospho-D-ribosyl)imidazole-4-carboxamide from 5-amino-1-(5-phospho-D-ribosyl)imidazole-4-carboxylate: step 1/2. The chain is Phosphoribosylaminoimidazole-succinocarboxamide synthase from Marinomonas sp. (strain MWYL1).